The following is a 200-amino-acid chain: MKSSKQLVQDAKDYRFNPAIPLRIYLKTCIGILEKAQCAFQANDLSLSFIYYFRYVDLLTNKLSRHPELLRMDASSSSSSSYIHKREYLQLIKLEVPAVCKIIESLRTQIDSQYSKLQTSLANNIAKPNINANTTPVQVEQQPLPKKSFDEYSFNQSISFFQKISNAQLNTGASSQSQATARDEAYRLNYPELPRLTFST.

This sequence belongs to the RFU1 family. Interacts with BRO1 and DOA4.

Its subcellular location is the endosome. In terms of biological role, inhibitor of the DOA4 deubiquitinase involved in the regulation of protein degradation by the proteasome and maintenance of a normal level of free ubiquitin. The sequence is that of Regulator of free ubiquitin chains 1 (RFU1) from Saccharomyces cerevisiae (strain RM11-1a) (Baker's yeast).